The following is a 101-amino-acid chain: Small ribosomal subunit protein uS10 (101 aa).

The protein belongs to the universal ribosomal protein uS10 family. In terms of assembly, part of the 30S ribosomal subunit.

Functionally, involved in the binding of tRNA to the ribosomes. The chain is Small ribosomal subunit protein uS10 from Saccharopolyspora erythraea (strain ATCC 11635 / DSM 40517 / JCM 4748 / NBRC 13426 / NCIMB 8594 / NRRL 2338).